Reading from the N-terminus, the 72-residue chain is DNA-directed RNA polymerase subunit omega (72 aa).

It belongs to the RNA polymerase subunit omega family. In terms of assembly, the RNAP catalytic core consists of 2 alpha, 1 beta, 1 beta' and 1 omega subunit. When a sigma factor is associated with the core the holoenzyme is formed, which can initiate transcription.

It catalyses the reaction RNA(n) + a ribonucleoside 5'-triphosphate = RNA(n+1) + diphosphate. Its function is as follows. Promotes RNA polymerase assembly. Latches the N- and C-terminal regions of the beta' subunit thereby facilitating its interaction with the beta and alpha subunits. This chain is DNA-directed RNA polymerase subunit omega, found in Staphylococcus aureus (strain Mu3 / ATCC 700698).